The sequence spans 1358 residues: Tenascin-R (1358 aa).

Residues 1 to 31 form the signal peptide; it reads MGIDGETVVLKNMLIGVNLILLGSMLKPSEC. A disordered region spans residues 37–58; the sequence is TERAQRQTVEEEGGASSYNTSS. N-linked (GlcNAc...) asparagine glycosylation occurs at Asn55. Residues 127 to 157 adopt a coiled-coil conformation; that stretch reads CASSSQVLQELLSRIEMLEREVSLLRDQCNT. Ser176 carries O-linked (Xyl...) (chondroitin sulfate) serine glycosylation. 2 N-linked (GlcNAc...) asparagine glycosylation sites follow: Asn180 and Asn198. EGF-like domains are found at residues 188-199, 219-230, and 250-261; these read CICNEGWFGKNC, CICDSEYSGDDC, and CVCEEPYTGEDC. O-linked (Xyl...) (chondroitin sulfate) serine glycosylation occurs at Ser271. An N-linked (GlcNAc...) asparagine glycan is attached at Asn278. The EGF-like 4 domain maps to 281–292; that stretch reads CLCQEGYAGEDC. Intrachain disulfides connect Cys297-Cys307 and Cys314-Cys323. An O-linked (Xyl...) (chondroitin sulfate) serine glycan is attached at Ser302. Residues 312-323 enclose the EGF-like 5 domain; that stretch reads CICEEGYQGPDC. Fibronectin type-III domains follow at residues 328 to 420, 421 to 505, 506 to 597, 598 to 687, 688 to 777, 778 to 865, 866 to 955, 956 to 1042, and 1043 to 1131; these read PPED…TPQG, LQFK…TVID, GPTQ…IDAP, KNLR…TELD, SPRD…FRPI, SHLH…TGID, PPKN…AMDS, PMDL…TLLD, and PPDN…GGRV. Residues Asn392, Asn470, and Asn581 are each glycosylated (N-linked (GlcNAc...) asparagine). Ser724 carries the post-translational modification Phosphoserine. 6 N-linked (GlcNAc...) asparagine glycosylation sites follow: Asn791, Asn869, Asn874, Asn1036, Asn1046, and Asn1261. One can recognise a Fibrinogen C-terminal domain in the interval 1129 to 1344; it reads GRVFSHPQDC…FVEMKMRPYI (216 aa).

This sequence belongs to the tenascin family. In terms of assembly, interacts with BCAN and ACAN in a calcium-dependent manner. Interacts with SCN2B, PTPRZ1, and CSPG3. Forms oligomers. Isoforms 1 and 2 form respectively trimeric (tribrachion) and dimeric kink-armed rodlike structures, which are linked by disulfide bridges. Interacts with CNTN1, TNC and FN1. Post-translationally, contains N-linked oligosaccharides with a sulfated carbohydrate structures. Contains N-linked oligosaccharides, O-linked sialylated structures and O-linked chondroitin sulfate glycosaminoglycans. As to expression, brain-specific.

The protein localises to the secreted. It localises to the extracellular space. The protein resides in the extracellular matrix. Its function is as follows. Neural extracellular matrix (ECM) protein involved in interactions with different cells and matrix components. Theses interactions can influence cellular behavior by either evoking a stable adhesion and differentiation, or repulsion and inhibition of neurite growth. Binding to cell surface gangliosides inhibits RGD-dependent integrin-mediated cell adhesion and results in an inhibition of PTK2/FAK1 (FAK) phosphorylation and cell detachment. Binding to membrane surface sulfatides results in a oligodendrocyte adhesion and differentiation. Interaction with CNTN1 induces a repulsion of neurons and an inhibition of neurite outgrowth. Interacts with SCN2B may play a crucial role in clustering and regulation of activity of sodium channels at nodes of Ranvier. TNR-linked chondroitin sulfate glycosaminoglycans are involved in the interaction with FN1 and mediates inhibition of cell adhesion and neurite outgrowth. The highly regulated addition of sulfated carbohydrate structure may modulate the adhesive properties of TNR over the course of development and during synapse maintenance. This is Tenascin-R (Tnr) from Mus musculus (Mouse).